The chain runs to 226 residues: ATP synthase subunit a (226 aa).

The next 5 helical transmembrane spans lie at 20–40 (LNWL…WLLP), 74–94 (FISL…PYIF), 100–120 (LTLT…YGWI), 158–180 (LAVR…GNTG), and 197–217 (IALL…FAVL).

Belongs to the ATPase A chain family. In terms of assembly, F-type ATPases have 2 components, CF(1) - the catalytic core - and CF(0) - the membrane proton channel. CF(1) has five subunits: alpha(3), beta(3), gamma(1), delta(1), epsilon(1). CF(0) has three main subunits: a, b and c.

The protein localises to the mitochondrion inner membrane. In terms of biological role, mitochondrial membrane ATP synthase (F(1)F(0) ATP synthase or Complex V) produces ATP from ADP in the presence of a proton gradient across the membrane which is generated by electron transport complexes of the respiratory chain. F-type ATPases consist of two structural domains, F(1) - containing the extramembraneous catalytic core and F(0) - containing the membrane proton channel, linked together by a central stalk and a peripheral stalk. During catalysis, ATP synthesis in the catalytic domain of F(1) is coupled via a rotary mechanism of the central stalk subunits to proton translocation. Key component of the proton channel; it may play a direct role in the translocation of protons across the membrane. This chain is ATP synthase subunit a (ATP6), found in Anopheles quadrimaculatus (Common malaria mosquito).